The following is a 294-amino-acid chain: Putative maltodextrin utilization protein YvdJ (294 aa).

The next 4 helical transmembrane spans lie at 35–55 (LSFL…VSFV), 184–204 (MIMM…TFVL), 228–248 (IAIC…MVHF), and 249–269 (DLIT…SFAF).

It is found in the cell membrane. Functionally, could have a role in maltodextrin utilization. This Bacillus subtilis (strain 168) protein is Putative maltodextrin utilization protein YvdJ (yvdJ).